The following is a 241-amino-acid chain: Phosphoglycolate phosphatase (241 aa).

Residue Asp-8 is the Nucleophile of the active site. Mg(2+) is bound by residues Asp-8, Asp-10, and Asp-174.

This sequence belongs to the HAD-like hydrolase superfamily. CbbY/CbbZ/Gph/YieH family. The cofactor is Mg(2+).

The catalysed reaction is 2-phosphoglycolate + H2O = glycolate + phosphate. The protein operates within organic acid metabolism; glycolate biosynthesis; glycolate from 2-phosphoglycolate: step 1/1. Specifically catalyzes the dephosphorylation of 2-phosphoglycolate. Is involved in the dissimilation of the intracellular 2-phosphoglycolate formed during the DNA repair of 3'-phosphoglycolate ends, a major class of DNA lesions induced by oxidative stress. The chain is Phosphoglycolate phosphatase from Rhodospirillum rubrum (strain ATCC 11170 / ATH 1.1.1 / DSM 467 / LMG 4362 / NCIMB 8255 / S1).